Reading from the N-terminus, the 285-residue chain is N-alpha-acetyltransferase 40 (285 aa).

One can recognise an N-acetyltransferase domain in the interval isoleucine 88–aspartate 274. Substrate-binding positions include tyrosine 116, threonine 163–glutamate 165, and tyrosine 185. Acetyl-CoA-binding positions include valine 187 to valine 189 and glycine 195 to arginine 200. Threonine 228 contacts substrate. Asparagine 233 provides a ligand contact to acetyl-CoA.

This sequence belongs to the acetyltransferase family. NAA40 subfamily.

Its subcellular location is the nucleus. The protein resides in the cytoplasm. The enzyme catalyses N-terminal L-seryl-[histone H4] + acetyl-CoA = N-terminal N(alpha)-acetyl-L-seryl-[histone H4] + CoA + H(+). The catalysed reaction is N-terminal L-seryl-[histone H2A] + acetyl-CoA = N-terminal N(alpha)-acetyl-L-seryl-[histone H2A] + CoA + H(+). Functionally, N-alpha-acetyltransferase that specifically mediates the acetylation of the N-terminal residues of histones H4 and H2A. The polypeptide is N-alpha-acetyltransferase 40 (Saccharomyces cerevisiae (strain ATCC 204508 / S288c) (Baker's yeast)).